Reading from the N-terminus, the 321-residue chain is Homoserine O-succinyltransferase (321 aa).

Catalysis depends on Cys-142, which acts as the Acyl-thioester intermediate. Positions 163 and 192 each coordinate substrate. The Proton acceptor role is filled by His-235. Glu-237 is a catalytic residue. Arg-249 contacts substrate.

This sequence belongs to the MetA family.

The protein localises to the cytoplasm. It carries out the reaction L-homoserine + succinyl-CoA = O-succinyl-L-homoserine + CoA. Its pathway is amino-acid biosynthesis; L-methionine biosynthesis via de novo pathway; O-succinyl-L-homoserine from L-homoserine: step 1/1. Its function is as follows. Transfers a succinyl group from succinyl-CoA to L-homoserine, forming succinyl-L-homoserine. In Shewanella loihica (strain ATCC BAA-1088 / PV-4), this protein is Homoserine O-succinyltransferase.